A 409-amino-acid polypeptide reads, in one-letter code: NADH-quinone oxidoreductase subunit D (409 aa).

This sequence belongs to the complex I 49 kDa subunit family. As to quaternary structure, NDH-1 is composed of 14 different subunits. Subunits NuoB, C, D, E, F, and G constitute the peripheral sector of the complex.

Its subcellular location is the cell inner membrane. The catalysed reaction is a quinone + NADH + 5 H(+)(in) = a quinol + NAD(+) + 4 H(+)(out). Its function is as follows. NDH-1 shuttles electrons from NADH, via FMN and iron-sulfur (Fe-S) centers, to quinones in the respiratory chain. The immediate electron acceptor for the enzyme in this species is believed to be ubiquinone. Couples the redox reaction to proton translocation (for every two electrons transferred, four hydrogen ions are translocated across the cytoplasmic membrane), and thus conserves the redox energy in a proton gradient. The sequence is that of NADH-quinone oxidoreductase subunit D from Campylobacter concisus (strain 13826).